The primary structure comprises 968 residues: RNA polymerase-associated protein RapA (968 aa).

The region spanning 163-332 (EVGRRYAPRV…FARLRLLDPD (170 aa)) is the Helicase ATP-binding domain. Residue 176-183 (DEVGLGKT) participates in ATP binding. A DEAH box motif is present at residues 278-281 (DEAH). A Helicase C-terminal domain is found at 491–643 (RVDWLIAFLK…ELTCPSGHVL (153 aa)).

It belongs to the SNF2/RAD54 helicase family. RapA subfamily. Interacts with the RNAP. Has a higher affinity for the core RNAP than for the holoenzyme. Its ATPase activity is stimulated by binding to RNAP.

Functionally, transcription regulator that activates transcription by stimulating RNA polymerase (RNAP) recycling in case of stress conditions such as supercoiled DNA or high salt concentrations. Probably acts by releasing the RNAP, when it is trapped or immobilized on tightly supercoiled DNA. Does not activate transcription on linear DNA. Probably not involved in DNA repair. In Shewanella sp. (strain W3-18-1), this protein is RNA polymerase-associated protein RapA.